The chain runs to 113 residues: Small ribosomal subunit protein uS17 (113 aa).

It belongs to the universal ribosomal protein uS17 family. In terms of assembly, part of the 30S ribosomal subunit.

Its function is as follows. One of the primary rRNA binding proteins, it binds specifically to the 5'-end of 16S ribosomal RNA. This Nanoarchaeum equitans (strain Kin4-M) protein is Small ribosomal subunit protein uS17.